The following is a 319-amino-acid chain: MASEEKIYDVIIIGAGPAGMTAALYTSRADLDTLMIERGVPGGQMVNTAEVENYPGFDSILGPDLSDKMLSGAKQFGAEYAYGDIKEVVDGKEFKTVTAGSKTYKARAIIIATGAEHRKLGAAGEEELSGRGVSYCAVCDGAFFKNRELIVVGGGDSAVEEGTYLTRYADKVTIVHRRDKLRAQQILQDRAFKDEKVDFIWNSTVEEIVGDGKKVTGAKLVSTVDGSESIMPVDGVFIYVGLVPLTKAFLNLGITDDEGYIVTDEEMRTNLPGIFAAGDVRAKSLRQIVTATGDGGLAGQNAQKYVEELKESLEAEAAK.

Residue 37–44 (ERGVPGGQ) participates in FAD binding. A disulfide bridge links cysteine 136 with cysteine 139. 279–288 (DVRAKSLRQI) contacts FAD.

The protein belongs to the class-II pyridine nucleotide-disulfide oxidoreductase family. In terms of assembly, homodimer. FAD is required as a cofactor.

The protein resides in the cytoplasm. The enzyme catalyses [thioredoxin]-dithiol + NADP(+) = [thioredoxin]-disulfide + NADPH + H(+). This Listeria monocytogenes serovar 1/2a (strain ATCC BAA-679 / EGD-e) protein is Thioredoxin reductase (trxB).